Reading from the N-terminus, the 74-residue chain is Benzylsuccinate synthase beta subunit (74 aa).

In terms of assembly, heterohexamer composed of 2 alpha subunits, 2 beta subunits and 2 gamma subunits.

The enzyme catalyses toluene + fumarate = 2-benzylsuccinate. It functions in the pathway xenobiotic degradation; toluene degradation. Its activity is regulated as follows. Activated by the benzylsuccinate synthase activating enzyme BssD. Rapidly inactivated by oxygen. Functionally, catalyzes the addition of fumarate to the methyl group of toluene, leading to the formation of benzylsuccinate. The chain is Benzylsuccinate synthase beta subunit (bssB) from Thauera aromatica.